We begin with the raw amino-acid sequence, 344 residues long: Probable dual-specificity RNA methyltransferase RlmN (344 aa).

Glu90 acts as the Proton acceptor in catalysis. The Radical SAM core domain maps to 96-326 (YKYGNAICIS…VTIRRELGSS (231 aa)). Cys103 and Cys331 are disulfide-bonded. Cys110, Cys114, and Cys117 together coordinate [4Fe-4S] cluster. S-adenosyl-L-methionine-binding positions include 157–158 (GE), Ser189, 212–214 (SLH), and Asn288. The active-site S-methylcysteine intermediate is the Cys331.

This sequence belongs to the radical SAM superfamily. RlmN family. [4Fe-4S] cluster is required as a cofactor.

Its subcellular location is the cytoplasm. The enzyme catalyses adenosine(2503) in 23S rRNA + 2 reduced [2Fe-2S]-[ferredoxin] + 2 S-adenosyl-L-methionine = 2-methyladenosine(2503) in 23S rRNA + 5'-deoxyadenosine + L-methionine + 2 oxidized [2Fe-2S]-[ferredoxin] + S-adenosyl-L-homocysteine. It carries out the reaction adenosine(37) in tRNA + 2 reduced [2Fe-2S]-[ferredoxin] + 2 S-adenosyl-L-methionine = 2-methyladenosine(37) in tRNA + 5'-deoxyadenosine + L-methionine + 2 oxidized [2Fe-2S]-[ferredoxin] + S-adenosyl-L-homocysteine. Its function is as follows. Specifically methylates position 2 of adenine 2503 in 23S rRNA and position 2 of adenine 37 in tRNAs. The protein is Probable dual-specificity RNA methyltransferase RlmN of Caldicellulosiruptor saccharolyticus (strain ATCC 43494 / DSM 8903 / Tp8T 6331).